Here is a 540-residue protein sequence, read N- to C-terminus: Protein SOSEKI 3 (540 aa).

Residues Lys-32 to Asp-123 are DIX-like oligomerization domain. 2 disordered regions span residues Glu-147 to Asn-201 and Ala-219 to Gly-294. Composition is skewed to low complexity over residues Ser-150–Met-163 and Arg-185–Pro-194. Residues Ala-221–Val-244 show a composition bias toward polar residues. The segment covering Thr-246–Thr-256 has biased composition (acidic residues). The segment covering Asn-280–Ser-292 has biased composition (low complexity). The Association to cell membranes signature appears at Cys-342–Gly-343. Positions Lys-412 to His-492 are disordered. Polar residues predominate over residues Ser-418–Met-437. Residues Ser-471–Thr-482 are compositionally biased toward basic and acidic residues.

This sequence belongs to the SOSEKI family. As to quaternary structure, homodimer. Forms long polymer filaments with other SOKs proteins polymers (e.g. SOK1, SOK2, SOK3 and SOK4) crucial for polar localization and biological activity. Binds to ANGUSTIFOLIA (AN). In terms of tissue distribution, expressed during embryogenesis and in roots.

Its subcellular location is the cell membrane. Its function is as follows. SOSEKI proteins (SOK1-5) locally interpret global polarity cues and can influence cell division orientation to coordinate cell polarization relative to body axes, probably by guiding ANGUSTIFOLIA (AN) polarized localization. This Arabidopsis thaliana (Mouse-ear cress) protein is Protein SOSEKI 3.